Reading from the N-terminus, the 90-residue chain is Probable Fe(2+)-trafficking protein (90 aa).

Belongs to the Fe(2+)-trafficking protein family.

Its function is as follows. Could be a mediator in iron transactions between iron acquisition and iron-requiring processes, such as synthesis and/or repair of Fe-S clusters in biosynthetic enzymes. This is Probable Fe(2+)-trafficking protein from Herminiimonas arsenicoxydans.